The chain runs to 204 residues: Peptidyl-prolyl cis-trans isomerase CYP20-1 (204 aa).

Residues 1-23 (MASSVTLLLWSLLLLGTLSAIQA) form the signal peptide. The region spanning 38 to 201 (YFDVEIDGKA…SKVVIVDSGE (164 aa)) is the PPIase cyclophilin-type domain.

The protein belongs to the cyclophilin-type PPIase family. As to quaternary structure, interacts with the PP2A A subunit PP2AA1/RCN1. In terms of tissue distribution, ubiquitous, mostly in aerial organs. Higher levels in leaf and buds, and lower levels in seedlings.

The protein resides in the endoplasmic reticulum. It localises to the secreted. The enzyme catalyses [protein]-peptidylproline (omega=180) = [protein]-peptidylproline (omega=0). Its activity is regulated as follows. Binds cyclosporin A (CsA). CsA mediates some of its effects via an inhibitory action on PPIase. In terms of biological role, PPIases accelerate the folding of proteins. It catalyzes the cis-trans isomerization of proline imidic peptide bonds in oligopeptides. Seems to be involved in root development. The polypeptide is Peptidyl-prolyl cis-trans isomerase CYP20-1 (CYP20-1) (Arabidopsis thaliana (Mouse-ear cress)).